The chain runs to 228 residues: Large ribosomal subunit protein uL1 (228 aa).

Belongs to the universal ribosomal protein uL1 family. Part of the 50S ribosomal subunit.

In terms of biological role, binds directly to 23S rRNA. The L1 stalk is quite mobile in the ribosome, and is involved in E site tRNA release. Protein L1 is also a translational repressor protein, it controls the translation of the L11 operon by binding to its mRNA. The protein is Large ribosomal subunit protein uL1 of Clavibacter michiganensis subsp. michiganensis (strain NCPPB 382).